Consider the following 259-residue polypeptide: GTP cyclohydrolase FolE2 (259 aa).

Belongs to the GTP cyclohydrolase IV family.

It carries out the reaction GTP + H2O = 7,8-dihydroneopterin 3'-triphosphate + formate + H(+). It functions in the pathway cofactor biosynthesis; 7,8-dihydroneopterin triphosphate biosynthesis; 7,8-dihydroneopterin triphosphate from GTP: step 1/1. In terms of biological role, converts GTP to 7,8-dihydroneopterin triphosphate. The chain is GTP cyclohydrolase FolE2 from Thermosipho melanesiensis (strain DSM 12029 / CIP 104789 / BI429).